An 80-amino-acid chain; its full sequence is Putative membrane protein insertion efficiency factor (80 aa).

The interval lysine 61–glutamate 80 is disordered. Residues threonine 62–glutamate 80 show a composition bias toward basic and acidic residues.

This sequence belongs to the UPF0161 family.

The protein resides in the cell membrane. In terms of biological role, could be involved in insertion of integral membrane proteins into the membrane. The protein is Putative membrane protein insertion efficiency factor of Streptococcus pneumoniae (strain P1031).